A 49-amino-acid chain; its full sequence is Large ribosomal subunit protein bL33A (49 aa).

This sequence belongs to the bacterial ribosomal protein bL33 family.

The sequence is that of Large ribosomal subunit protein bL33A (rpmG1) from Enterococcus faecalis (strain ATCC 700802 / V583).